The primary structure comprises 122 residues: WUSCHEL-related homeobox 7 (122 aa).

The homeobox; WUS-type DNA-binding region spans Ala25 to Cys89. A compositionally biased stretch (basic and acidic residues) spans Asp98–Asp111. Positions Asp98 to Gly122 are disordered. Basic residues predominate over residues Asn112–Gly122.

This sequence belongs to the WUS homeobox family.

It localises to the nucleus. Potential transcription factor that plays a central role during developmental processes. This is WUSCHEL-related homeobox 7 (WOX7) from Arabidopsis thaliana (Mouse-ear cress).